A 224-amino-acid chain; its full sequence is Octanoyltransferase (224 aa).

The 176-residue stretch at 38 to 213 (SATVDELWWV…YLVRRLGYSA (176 aa)) folds into the BPL/LPL catalytic domain. Substrate is bound by residues 77-84 (RGGQVTYH), 144-146 (SLG), and 157-159 (GLS). Cysteine 175 acts as the Acyl-thioester intermediate in catalysis.

The protein belongs to the LipB family.

It localises to the cytoplasm. It catalyses the reaction octanoyl-[ACP] + L-lysyl-[protein] = N(6)-octanoyl-L-lysyl-[protein] + holo-[ACP] + H(+). It participates in protein modification; protein lipoylation via endogenous pathway; protein N(6)-(lipoyl)lysine from octanoyl-[acyl-carrier-protein]: step 1/2. Functionally, catalyzes the transfer of endogenously produced octanoic acid from octanoyl-acyl-carrier-protein onto the lipoyl domains of lipoate-dependent enzymes. Lipoyl-ACP can also act as a substrate although octanoyl-ACP is likely to be the physiological substrate. This chain is Octanoyltransferase, found in Nitrosococcus oceani (strain ATCC 19707 / BCRC 17464 / JCM 30415 / NCIMB 11848 / C-107).